The chain runs to 160 residues: Phosphopantetheine adenylyltransferase (160 aa).

Substrate is bound at residue S8. ATP contacts are provided by residues 8–9 (SF) and H16. Substrate is bound by residues K40, L74, and K88. Residues 89 to 91 (GLR), E99, and 124 to 130 (YSFVSST) contribute to the ATP site.

It belongs to the bacterial CoaD family. In terms of assembly, homohexamer. Mg(2+) is required as a cofactor.

The protein resides in the cytoplasm. It carries out the reaction (R)-4'-phosphopantetheine + ATP + H(+) = 3'-dephospho-CoA + diphosphate. The protein operates within cofactor biosynthesis; coenzyme A biosynthesis; CoA from (R)-pantothenate: step 4/5. Functionally, reversibly transfers an adenylyl group from ATP to 4'-phosphopantetheine, yielding dephospho-CoA (dPCoA) and pyrophosphate. The protein is Phosphopantetheine adenylyltransferase of Thermus thermophilus (strain ATCC BAA-163 / DSM 7039 / HB27).